A 379-amino-acid chain; its full sequence is Succinyl-diaminopimelate desuccinylase (379 aa).

H68 contacts Zn(2+). Residue D70 is part of the active site. D101 is a Zn(2+) binding site. The active-site Proton acceptor is the E134. Zn(2+)-binding residues include E135, E163, and H352.

Belongs to the peptidase M20A family. DapE subfamily. Homodimer. Zn(2+) is required as a cofactor. Co(2+) serves as cofactor.

The catalysed reaction is N-succinyl-(2S,6S)-2,6-diaminopimelate + H2O = (2S,6S)-2,6-diaminopimelate + succinate. It functions in the pathway amino-acid biosynthesis; L-lysine biosynthesis via DAP pathway; LL-2,6-diaminopimelate from (S)-tetrahydrodipicolinate (succinylase route): step 3/3. Catalyzes the hydrolysis of N-succinyl-L,L-diaminopimelic acid (SDAP), forming succinate and LL-2,6-diaminopimelate (DAP), an intermediate involved in the bacterial biosynthesis of lysine and meso-diaminopimelic acid, an essential component of bacterial cell walls. This Dinoroseobacter shibae (strain DSM 16493 / NCIMB 14021 / DFL 12) protein is Succinyl-diaminopimelate desuccinylase.